The sequence spans 358 residues: MKSIVIVAGGTGGHISPGVALAEVLTELKEKIGYENLYLYSLVRNKNNPDLEQAPCPVLWHNLPPLSSNFFLFPIRYTIQIIKTFFIFKKLNIDVVIGMGGYSTVSSILYGIFFRKKIYLCEQNTIPGNVNRLFFRFASKVAFSLPPKNSKIPCDYQVLGNPLRKKTIPKMSLKFFEKYDTKKKKQFNVLVMGGSQGARQINNIVIALMSHEEINKQFRFRVLTGSALYEEVSKKSKKDAELISYSDNMKEHYEWANFVIARSGSGVLSECAAFALPMILIPYPYAKDDHQMANAKYFELNGAAIVVDQKDEDESHLFRVLDQMANDVNLLNDMSISSLECSHVDASKDTAKYFFSLD.

UDP-N-acetyl-alpha-D-glucosamine contacts are provided by residues 11–13, asparagine 124, arginine 164, serine 195, and glutamine 291; that span reads TGG.

Belongs to the glycosyltransferase 28 family. MurG subfamily.

It localises to the cell inner membrane. The catalysed reaction is di-trans,octa-cis-undecaprenyl diphospho-N-acetyl-alpha-D-muramoyl-L-alanyl-D-glutamyl-meso-2,6-diaminopimeloyl-D-alanyl-D-alanine + UDP-N-acetyl-alpha-D-glucosamine = di-trans,octa-cis-undecaprenyl diphospho-[N-acetyl-alpha-D-glucosaminyl-(1-&gt;4)]-N-acetyl-alpha-D-muramoyl-L-alanyl-D-glutamyl-meso-2,6-diaminopimeloyl-D-alanyl-D-alanine + UDP + H(+). Its pathway is cell wall biogenesis; peptidoglycan biosynthesis. In terms of biological role, cell wall formation. Catalyzes the transfer of a GlcNAc subunit on undecaprenyl-pyrophosphoryl-MurNAc-pentapeptide (lipid intermediate I) to form undecaprenyl-pyrophosphoryl-MurNAc-(pentapeptide)GlcNAc (lipid intermediate II). In Leptospira interrogans serogroup Icterohaemorrhagiae serovar copenhageni (strain Fiocruz L1-130), this protein is UDP-N-acetylglucosamine--N-acetylmuramyl-(pentapeptide) pyrophosphoryl-undecaprenol N-acetylglucosamine transferase.